A 214-amino-acid polypeptide reads, in one-letter code: NADH-quinone oxidoreductase subunit C (214 aa).

It belongs to the complex I 30 kDa subunit family. NDH-1 is composed of 14 different subunits. Subunits NuoB, C, D, E, F, and G constitute the peripheral sector of the complex.

Its subcellular location is the cell inner membrane. The catalysed reaction is a quinone + NADH + 5 H(+)(in) = a quinol + NAD(+) + 4 H(+)(out). NDH-1 shuttles electrons from NADH, via FMN and iron-sulfur (Fe-S) centers, to quinones in the respiratory chain. The immediate electron acceptor for the enzyme in this species is believed to be ubiquinone. Couples the redox reaction to proton translocation (for every two electrons transferred, four hydrogen ions are translocated across the cytoplasmic membrane), and thus conserves the redox energy in a proton gradient. This chain is NADH-quinone oxidoreductase subunit C, found in Francisella tularensis subsp. mediasiatica (strain FSC147).